Reading from the N-terminus, the 41-residue chain is Photosystem II reaction center protein L (41 aa).

A helical membrane pass occupies residues 20–40 (SLYWGLLLIFVLAVPFSNYFF).

The protein belongs to the PsbL family. PSII is composed of 1 copy each of membrane proteins PsbA, PsbB, PsbC, PsbD, PsbE, PsbF, PsbH, PsbI, PsbJ, PsbK, PsbL, PsbM, PsbT, PsbX, PsbY, PsbZ, Psb30/Ycf12, at least 3 peripheral proteins of the oxygen-evolving complex and a large number of cofactors. It forms dimeric complexes.

The protein localises to the plastid. Its subcellular location is the chloroplast thylakoid membrane. One of the components of the core complex of photosystem II (PSII). PSII is a light-driven water:plastoquinone oxidoreductase that uses light energy to abstract electrons from H(2)O, generating O(2) and a proton gradient subsequently used for ATP formation. It consists of a core antenna complex that captures photons, and an electron transfer chain that converts photonic excitation into a charge separation. This subunit is found at the monomer-monomer interface and is required for correct PSII assembly and/or dimerization. The chain is Photosystem II reaction center protein L from Pinus koraiensis (Korean pine).